A 657-amino-acid polypeptide reads, in one-letter code: Wall-associated receptor kinase-like 20 (657 aa).

Positions 1–23 are cleaved as a signal peptide; the sequence is MEKKRSYYALLIPTLLTVWLACA. Residues 24-293 lie on the Extracellular side of the membrane; it reads GHSCARHAKA…KHCKKKKKTV (270 aa). Asn-140 carries N-linked (GlcNAc...) asparagine glycosylation. Residues 294–314 form a helical membrane-spanning segment; that stretch reads VFAGAAVAVVGVTLAIAVAVI. The Cytoplasmic segment spans residues 315 to 657; the sequence is GTKHSHQKVK…NILSQEVTET (343 aa). The region spanning 363 to 646 is the Protein kinase domain; that stretch reads FSKDNLIGTG…KEVADEIEYI (284 aa). Residues 369–377 and Lys-391 contribute to the ATP site; that span reads IGTGGFGEV. Asp-490 acts as the Proton acceptor in catalysis.

The protein belongs to the protein kinase superfamily. Ser/Thr protein kinase family.

The protein localises to the membrane. The catalysed reaction is L-seryl-[protein] + ATP = O-phospho-L-seryl-[protein] + ADP + H(+). It carries out the reaction L-threonyl-[protein] + ATP = O-phospho-L-threonyl-[protein] + ADP + H(+). Functionally, serine/threonine-protein kinase that may function as a signaling receptor of extracellular matrix component. The polypeptide is Wall-associated receptor kinase-like 20 (WAKL20) (Arabidopsis thaliana (Mouse-ear cress)).